A 223-amino-acid chain; its full sequence is Golgi to ER traffic protein 1 (223 aa).

A topological domain (lumenal) is located at residue methionine 1. The helical transmembrane segment at 2-21 (SWVVAIAVVFVVVLKVLEYS) threads the bilayer. The Cytoplasmic portion of the chain corresponds to 22-105 (TSYHDLVLQS…QIKGHLKKVK (84 aa)). Residues 56-105 (ENKSISAQDNYAKWTKNNRKLDKLDKEITELGAQLKAHNEQIKGHLKKVK) are a coiled coil. Residues 106-126 (LLLLTVPFLCFKLWKGKHIVY) form a helical membrane-spanning segment. Residues 127-177 (NLPHHQMFPQLVAGVWSQGWLYLAILPLQLAKSIVTGSSFAIETASFPHMG) lie on the Lumenal side of the membrane. Residues 178-194 (VSLGIWLWALNSVISNI) traverse the membrane as a helical segment. The Cytoplasmic segment spans residues 195–223 (EFMTMQLWAKPVSKPSKKLEIVTDEIKVD).

It belongs to the WRB/GET1 family. In terms of assembly, component of the Golgi to ER traffic (GET) complex, which is composed of GET1, GET2 and GET3. Within the complex, GET1 and GET2 form a heterotetramer which is stabilized by phosphatidylinositol binding and which binds to the GET3 homodimer.

It is found in the endoplasmic reticulum membrane. The protein resides in the golgi apparatus membrane. Functionally, required for the post-translational delivery of tail-anchored (TA) proteins to the endoplasmic reticulum. Together with GET2, acts as a membrane receptor for soluble GET3, which recognizes and selectively binds the transmembrane domain of TA proteins in the cytosol. The GET complex cooperates with the HDEL receptor ERD2 to mediate the ATP-dependent retrieval of resident ER proteins that contain a C-terminal H-D-E-L retention signal from the Golgi to the ER. In Candida glabrata (strain ATCC 2001 / BCRC 20586 / JCM 3761 / NBRC 0622 / NRRL Y-65 / CBS 138) (Yeast), this protein is Golgi to ER traffic protein 1.